The sequence spans 159 residues: MNISIISIGKLKEKYLKQGIAEYLKRLSAYAKVEVIELPDEKAPENLSEAEMLIVKEKEGIRILDKISDDTHVIALAIEGKQKSSEEFAVSLDRLATYGKSKVAFVIGGSLGLSSEVMKRSNESLSFSKMTLPHQLMRLVLLEQVYRAFRINRGEPYHK.

S-adenosyl-L-methionine is bound by residues Leu76, Gly108, and 127–132 (FSKMTL).

It belongs to the RNA methyltransferase RlmH family. In terms of assembly, homodimer.

It localises to the cytoplasm. The catalysed reaction is pseudouridine(1915) in 23S rRNA + S-adenosyl-L-methionine = N(3)-methylpseudouridine(1915) in 23S rRNA + S-adenosyl-L-homocysteine + H(+). In terms of biological role, specifically methylates the pseudouridine at position 1915 (m3Psi1915) in 23S rRNA. This Bacillus anthracis (strain CDC 684 / NRRL 3495) protein is Ribosomal RNA large subunit methyltransferase H.